A 1077-amino-acid chain; its full sequence is Error-prone DNA polymerase (1077 aa).

Belongs to the DNA polymerase type-C family. DnaE2 subfamily.

It localises to the cytoplasm. It catalyses the reaction DNA(n) + a 2'-deoxyribonucleoside 5'-triphosphate = DNA(n+1) + diphosphate. DNA polymerase involved in damage-induced mutagenesis and translesion synthesis (TLS). It is not the major replicative DNA polymerase. In Brucella melitensis biotype 1 (strain ATCC 23456 / CCUG 17765 / NCTC 10094 / 16M), this protein is Error-prone DNA polymerase.